A 338-amino-acid polypeptide reads, in one-letter code: Solute carrier family 35 member G5 (338 aa).

The disordered stretch occupies residues 1–27 (MAGSHPYFNLPDSTHPSPPSAPPSLRW). A run of 9 helical transmembrane segments spans residues 37–57 (TNGLLVALLGGGLPAGFVGPL), 67–87 (LPSLELLICRCLFHLPIALLL), 102–122 (GWACFCALLNVLSIGCAYSAV), 160–180 (CGLLGSILGLIIILGPGLWTL), 190–210 (TLGYVQAFLGGLALSLGLLVY), 221–241 (TVAFLSGLVGLLGCVPGLFVL), 250–270 (LLSWSCVGAEGILALVSFTCV), 281–301 (LVCAVLHSEVVVALILQYYML), and 305–325 (VALSDIMGAGVVLGSIAIITA). An EamA 1 domain is found at 49–174 (LPAGFVGPLS…SILGLIIILG (126 aa)). Residues 272–325 (YAVTKAHPALVCAVLHSEVVVALILQYYMLHETVALSDIMGAGVVLGSIAIITA) form the EamA 2 domain.

It belongs to the SLC35G solute transporter family. As to expression, expressed in placenta and testis.

Its subcellular location is the membrane. The chain is Solute carrier family 35 member G5 (SLC35G5) from Homo sapiens (Human).